The sequence spans 92 residues: Small ribosomal subunit protein uS19 (92 aa).

This sequence belongs to the universal ribosomal protein uS19 family.

Functionally, protein S19 forms a complex with S13 that binds strongly to the 16S ribosomal RNA. This Thermobifida fusca (strain YX) protein is Small ribosomal subunit protein uS19.